The chain runs to 106 residues: Urease subunit beta (106 aa).

It belongs to the urease beta subunit family. In terms of assembly, heterotrimer of UreA (gamma), UreB (beta) and UreC (alpha) subunits. Three heterotrimers associate to form the active enzyme.

The protein localises to the cytoplasm. It carries out the reaction urea + 2 H2O + H(+) = hydrogencarbonate + 2 NH4(+). The protein operates within nitrogen metabolism; urea degradation; CO(2) and NH(3) from urea (urease route): step 1/1. In Prochlorococcus marinus subsp. pastoris (strain CCMP1986 / NIES-2087 / MED4), this protein is Urease subunit beta.